Reading from the N-terminus, the 138-residue chain is MRVKHAVVLLMLISPLSWAGTMTFQFRNPNFGGNPNNGAFLLNSAQAQNSYKDPSYNDDFGIETPSALDNFTQAIQSQILGGLLSNINTGKPGRMVTNDYIVDIANRDGQLQLNVTDRKTGQTSTIQVSGLQNNSTDF.

The N-terminal stretch at 1–19 is a signal peptide; sequence MRVKHAVVLLMLISPLSWA.

Its function is as follows. May be involved in the biogenesis of curli organelles. In Escherichia coli O157:H7, this protein is Curli production assembly/transport component CsgF (csgF).